Here is a 61-residue protein sequence, read N- to C-terminus: Large ribosomal subunit protein uL30 (61 aa).

The protein belongs to the universal ribosomal protein uL30 family. Part of the 50S ribosomal subunit.

The polypeptide is Large ribosomal subunit protein uL30 (Thermobifida fusca (strain YX)).